We begin with the raw amino-acid sequence, 189 residues long: Recombination protein RecR (189 aa).

The C4-type zinc-finger motif lies at 48 to 63 (CQTCFHLSAEPLCDIC). A Toprim domain is found at 71–165 (QLLCVVADSR…QVSRIAYGLP (95 aa)).

It belongs to the RecR family.

In terms of biological role, may play a role in DNA repair. It seems to be involved in an RecBC-independent recombinational process of DNA repair. It may act with RecF and RecO. The sequence is that of Recombination protein RecR from Prochlorococcus marinus (strain MIT 9313).